Here is a 422-residue protein sequence, read N- to C-terminus: Fasciclin-like arabinogalactan protein 10 (422 aa).

Positions 1-25 are cleaved as a signal peptide; the sequence is MATSRAFTLFAFTLSLLTVASTVSG. FAS1 domains follow at residues 26-172 and 187-327; these read HNIT…NAPI and GVSN…DNVL. N-linked (GlcNAc...) asparagine glycans are attached at residues N27, N128, N162, N190, and N244. The interval 336-397 is disordered; it reads SSSPAPAPEP…PTSSENSNAK (62 aa). Pro residues predominate over residues 340 to 374; it reads APAPEPVSAPTPTPAKSPSPVEAPSPTAASPPAPP. Residues 386–397 are compositionally biased toward polar residues; it reads DSPTSSENSNAK. A lipid anchor (GPI-anchor amidated asparagine) is attached at N398. Residues 399–422 constitute a propeptide, removed in mature form; sequence AAFHVNAPALFTALVTIAATSLLL.

The protein belongs to the fasciclin-like AGP family.

It is found in the cell membrane. Its function is as follows. May be a cell surface adhesion protein. This chain is Fasciclin-like arabinogalactan protein 10 (FLA10), found in Arabidopsis thaliana (Mouse-ear cress).